The sequence spans 766 residues: MIWRRRAGAELSSLMALWEWIVLSLHCWVLAVAAVSDQHATSPFDWLLSDKGPFHRSQEYTDFVDRSRQGFSTRYKIYREFGRWKVNNLAVERRNFLGSPLPLAPEFFRNIRLLGRRPTLQQITENLIKKYGTHFLLSATLGGEESLTIFVDKRKLSKRSEGSETSTNSSSVTLETLHQLAASYFIDRDSTLRRLHHIQIASTAIKVTETRTGPLGCSNYDNLDSVSSVLVQSPENKIQLQGLQVLLPDYLQERFVQAALSYIACNSEGEFICKDNDCWCHCGPKFPECNCPSMDIQAMEENLLRITETWKAYNSDFEDSDEFKFFMKRLPMNYFLNTSTIMHLWTMDSNFQRRYEQLENSMKQLFLKAHRIVHKLFSLSKRCHKQPLISLPRQRTSTYWLTRIQSFLYCNENGLLGSFSEETHSCTCPNDQVVCTAFLPCTVGDASACLTCAPDNRTRCGTCNTGYMLSQGLCKPEVAESTDHYIGFETDLQDLEMKYLLQKTDRRIEVHAIFISNDMRLNSWFDPSWRKRMLLTLKSNKYKSSLVHMILGLSLQICLTKNSTLEPVLAVYVNPFGGSHSESWFMPVSESSFPDWERTKLDLPLQCYNWTLTLGNKWKTFFETVHIYLRSRIKANGPNSNESIYYEPLEFIDPSRNLGYMKINNIQVFGYSMHFDPEAIRDLILQLDYPYTQGSQDSALLQLLEIRDRVNKLSPPGQRRLDLFSCLLRHRLKLSTSEVVRIQSALQAFNAKLPNTVDYDTTKLCS.

An N-terminal signal peptide occupies residues 1–33 (MIWRRRAGAELSSLMALWEWIVLSLHCWVLAVA). The region spanning 74–264 (RYKIYREFGR…FVQAALSYIA (191 aa)) is the MACPF domain. Residues Asn-168, Asn-337, Asn-456, Asn-562, Asn-609, and Asn-641 are each glycosylated (N-linked (GlcNAc...) asparagine).

It belongs to the BRINP family. Expressed in the brain. Weakly expressed in embryonic stem (ES) cells. Expressed in ES-derived neural stem cells (NSCs) and neuronal cells.

The protein resides in the secreted. Its subcellular location is the mitochondrion. In terms of biological role, inhibits neuronal cell proliferation by negative regulation of the cell cycle transition. Promotes pituitary gonadotrope cell proliferation, migration and invasion, when overexpressed. May play a role in cell pituitary tumor development. This chain is BMP/retinoic acid-inducible neural-specific protein 3 (Brinp3), found in Mus musculus (Mouse).